Consider the following 526-residue polypeptide: Medium/long-chain-fatty-acid--[acyl-carrier-protein] ligase MbtM (526 aa).

K260 and K511 each carry N6-acetyllysine; by Pat.

It belongs to the ATP-dependent AMP-binding enzyme family. Post-translationally, acetylated on Lys-511 and Lys-260 by Pat. Lys-511 is the major acetylation site. Acetylation results in the inactivation of the enzyme.

It catalyses the reaction a long-chain fatty acid + holo-[ACP] + ATP = a long-chain fatty acyl-[ACP] + AMP + diphosphate. The enzyme catalyses a medium-chain fatty acid + holo-[ACP] + ATP = a medium-chain fatty acyl-[ACP] + AMP + diphosphate. It carries out the reaction hexadecanoate + holo-[ACP] + ATP = hexadecanoyl-[ACP] + AMP + diphosphate. The catalysed reaction is hexadecanoate + ATP + H(+) = hexadecanoyl-AMP + diphosphate. It catalyses the reaction hexadecanoyl-AMP + holo-[ACP] = hexadecanoyl-[ACP] + AMP + H(+). The enzyme catalyses dodecanoate + holo-[ACP] + ATP = dodecanoyl-[ACP] + AMP + diphosphate. It carries out the reaction dodecanoate + ATP + H(+) = dodecanoyl-AMP + diphosphate. The catalysed reaction is dodecanoyl-AMP + holo-[ACP] = dodecanoyl-[ACP] + AMP + H(+). It functions in the pathway siderophore biosynthesis; mycobactin biosynthesis. With respect to regulation, reversibly inactivated by post-translational acetylation by Pat in a cAMP-dependent manner and reactivated by Sir2 deacylase. Its function is as follows. Activates lipidic moieties required for mycobactin biosynthesis. Converts medium- to long-chain aliphatic fatty acids into acyl adenylate, which is further transferred on to the phosphopantetheine arm of the carrier protein MbtL. Shows a strong preference for palmitic acid (C16) and cannot use short-chain fatty acids. Proceeds via a Bi Uni Uni Bi ping-pong mechanism. During the first half-reaction (adenylation), fatty acid binds first to the free enzyme, followed by ATP and the release of pyrophosphate to form the adenylate intermediate. During the second half-reaction (ligation), holo-MbtL binds to the enzyme followed by the release of products AMP and acylated MbtL. The chain is Medium/long-chain-fatty-acid--[acyl-carrier-protein] ligase MbtM from Mycolicibacterium smegmatis (strain ATCC 700084 / mc(2)155) (Mycobacterium smegmatis).